A 242-amino-acid polypeptide reads, in one-letter code: Ubiquinone/menaquinone biosynthesis C-methyltransferase UbiE (242 aa).

Residues threonine 69, aspartate 87, and 114–115 (NA) contribute to the S-adenosyl-L-methionine site.

This sequence belongs to the class I-like SAM-binding methyltransferase superfamily. MenG/UbiE family.

It carries out the reaction a 2-demethylmenaquinol + S-adenosyl-L-methionine = a menaquinol + S-adenosyl-L-homocysteine + H(+). The enzyme catalyses a 2-methoxy-6-(all-trans-polyprenyl)benzene-1,4-diol + S-adenosyl-L-methionine = a 5-methoxy-2-methyl-3-(all-trans-polyprenyl)benzene-1,4-diol + S-adenosyl-L-homocysteine + H(+). Its pathway is quinol/quinone metabolism; menaquinone biosynthesis; menaquinol from 1,4-dihydroxy-2-naphthoate: step 2/2. The protein operates within cofactor biosynthesis; ubiquinone biosynthesis. Methyltransferase required for the conversion of demethylmenaquinol (DMKH2) to menaquinol (MKH2) and the conversion of 2-polyprenyl-6-methoxy-1,4-benzoquinol (DDMQH2) to 2-polyprenyl-3-methyl-6-methoxy-1,4-benzoquinol (DMQH2). The polypeptide is Ubiquinone/menaquinone biosynthesis C-methyltransferase UbiE (Zymomonas mobilis subsp. mobilis (strain ATCC 31821 / ZM4 / CP4)).